Consider the following 963-residue polypeptide: Ras-interacting protein 1 (963 aa).

Residues 1–10 show a composition bias toward basic and acidic residues; sequence MLSGERKEGG. Disordered regions lie at residues 1–22 and 35–118; these read MLSG…LPVG and LGRR…AQRW. The span at 41–57 shows a compositional bias: low complexity; that stretch reads SAASVKSSSSDTGSRSS. Arg-94 carries the post-translational modification Omega-N-methylarginine. The segment covering 96–113 has biased composition (gly residues); it reads SGTGTTGSSGAGGPGTPG. One can recognise a Ras-associating domain in the interval 144–259; that stretch reads PPGVLKIFGA…RRFELRGREE (116 aa). Ser-188, Ser-280, and Ser-292 each carry phosphoserine. Residues 267-356 are disordered; that stretch reads AFGAADSEGT…LSMAPGAADA (90 aa). Over residues 290-301 the composition is skewed to low complexity; it reads AASGGAALASPG. The span at 302-313 shows a compositional bias: gly residues; it reads PGTGSGAPAGSG. Over residues 320–333 the composition is skewed to low complexity; the sequence is NLSLRRSVSELSLQ. 4 positions are modified to phosphoserine: Ser-326, Ser-328, Ser-331, and Ser-419. A Dilute domain is found at 600–897; that stretch reads GRLARLIKEA…PPAEREAVDT (298 aa).

As to quaternary structure, interacts with Ras family members that have been activated by GTP binding. Interacts with HRAS, RAP1A, RAP2, RRAS, RAF1 and RRAS2. Interacts with MYH9 and ARHGAP29. In terms of tissue distribution, highly expressed in heart. Detected at lower levels in placenta and pancreas.

It is found in the cytoplasm. It localises to the perinuclear region. The protein resides in the golgi apparatus. Its subcellular location is the golgi stack. Functionally, required for the proper formation of vascular structures that develop via both vasculogenesis and angiogenesis. Acts as a critical and vascular-specific regulator of GTPase signaling, cell architecture, and adhesion, which is essential for endothelial cell morphogenesis and blood vessel tubulogenesis. Regulates the activity of Rho GTPases in part by recruiting ARHGAP29 and suppressing RhoA signaling and dampening ROCK and MYH9 activities in endothelial cells. May act as effector for Golgi-bound HRAS and other Ras-like proteins. May promote HRAS-mediated transformation. Negative regulator of amino acid starvation-induced autophagy. In Homo sapiens (Human), this protein is Ras-interacting protein 1 (RASIP1).